The primary structure comprises 122 residues: Large-conductance mechanosensitive channel (122 aa).

Helical transmembrane passes span 29-49 (FGKI…GLIF) and 66-86 (GVFI…FLFI).

It belongs to the MscL family. In terms of assembly, homopentamer.

The protein resides in the cell membrane. Functionally, channel that opens in response to stretch forces in the membrane lipid bilayer. May participate in the regulation of osmotic pressure changes within the cell. The chain is Large-conductance mechanosensitive channel from Macrococcus caseolyticus (strain JCSC5402) (Macrococcoides caseolyticum).